Reading from the N-terminus, the 179-residue chain is Ribosome maturation factor RimM (179 aa).

The 72-residue stretch at 102–173 (PEEYHYRDLI…ALHVQPPPGL (72 aa)) folds into the PRC barrel domain.

The protein belongs to the RimM family. In terms of assembly, binds ribosomal protein uS19.

It is found in the cytoplasm. Functionally, an accessory protein needed during the final step in the assembly of 30S ribosomal subunit, possibly for assembly of the head region. Essential for efficient processing of 16S rRNA. May be needed both before and after RbfA during the maturation of 16S rRNA. It has affinity for free ribosomal 30S subunits but not for 70S ribosomes. This chain is Ribosome maturation factor RimM, found in Synechococcus sp. (strain JA-2-3B'a(2-13)) (Cyanobacteria bacterium Yellowstone B-Prime).